We begin with the raw amino-acid sequence, 522 residues long: Glucose-1-phosphate adenylyltransferase large subunit, chloroplastic/amyloplastic (522 aa).

Residues Met1–Cys62 constitute a chloroplast transit peptide. A compositionally biased stretch (basic and acidic residues) spans Ser28 to Glu42. Residues Ser28–Gly54 form a disordered region.

This sequence belongs to the bacterial/plant glucose-1-phosphate adenylyltransferase family. Heterotetramer. Abundantly expressed in the whole grains, a slightly less abundant expression is seen in leaves, while a low level expression is seen in the roots. A greater expression is seen in the endosperm than in the embryo and pericarp layers.

The protein resides in the plastid. Its subcellular location is the chloroplast. It is found in the amyloplast. The catalysed reaction is alpha-D-glucose 1-phosphate + ATP + H(+) = ADP-alpha-D-glucose + diphosphate. It functions in the pathway glycan biosynthesis; starch biosynthesis. Insensitive to 3'phosphoglycerate and orthophosphate. This protein plays a role in synthesis of starch. It catalyzes the synthesis of the activated glycosyl donor, ADP-glucose from Glc-1-P and ATP. In Triticum aestivum (Wheat), this protein is Glucose-1-phosphate adenylyltransferase large subunit, chloroplastic/amyloplastic (AGP-L).